The sequence spans 426 residues: Mediator of RNA polymerase II transcription subunit 4 (426 aa).

The disordered stretch occupies residues methionine 1 to serine 56. Polar residues predominate over residues glycine 19–proline 28. Over residues serine 36–serine 56 the composition is skewed to low complexity. Residues threonine 160–lysine 212 are a coiled coil. Disordered stretches follow at residues lysine 214–valine 236 and isoleucine 373–aspartate 426. Residues isoleucine 406–aspartate 426 are compositionally biased toward acidic residues.

The protein belongs to the Mediator complex subunit 4 family. In terms of assembly, component of the Mediator complex.

The protein resides in the nucleus. Its function is as follows. Component of the Mediator complex, a coactivator involved in the regulated transcription of nearly all RNA polymerase II-dependent genes. Mediator functions as a bridge to convey information from gene-specific regulatory proteins to the basal RNA polymerase II transcription machinery. The Mediator complex, having a compact conformation in its free form, is recruited to promoters by direct interactions with regulatory proteins and serves for the assembly of a functional preinitiation complex with RNA polymerase II and the general transcription factors. This Arabidopsis thaliana (Mouse-ear cress) protein is Mediator of RNA polymerase II transcription subunit 4 (MED4).